An 816-amino-acid polypeptide reads, in one-letter code: MYVVKRDGRQETVHFDKITARLKKLSYGLSSDHCDPVLVAQKVCAGVYKGVTTSQLDELAAETAAAMTCNHPDYASLAARIAVSNLHKNTKKSFSETIKDMFYHVNDRSGLKSPLIADDVFEIIMQNAARLDSEIIYDRDFEYDYFGFKTLERSYLLKVQGTVVERPQHMLMRVAVGIHKDDIDSVIQTYHLMSQRWFTHASPTLFNAGTPRPQLSSCFLVCMKDDSIEGIYETLKECAVISKSAGGIGVSVHNIRATGSYIRGTNGTSNGIVPMLRVFNDTARYVDQGGGKRKGAFAVYLEPWHADVYEFLELRKNHGKEEHRARDLFYALWLPDLFMERVQNNGQWSLFCPNEAPGLADCWGAEFETLYTKYEREGKAKKVVQAQQLWYEILTSQVETGTPYMLFKDSCNRKSNQQNLGTIKSSNLCTEIIEYTSPTETAVCNLASIALPRFVREKGVPLDSHPPKLAGSLDSKNRYFDFEKLAEVTATVTVNLNKIIDVNYYPVETAKTSNMRHRPIGIGVQGLADAFILLGMPFDSPEAQQLNKDIFETIYYHALKASTELAARLGPYETYAGSPVSKGILQPDMWNVIPSDRWDWAVLRDMISKNGVRNSLLVAPMPTASTSQILGNNECFEPYTSNIYSRRVLSGEFVVVNKHLLHDLTDMGLWTPTLKNKLINENGSIVNVAEIPDDLKAIYRTVWEIKQRTVVDMAADRGCYIDQSQSLNIHMDKPNFAKLTSLHFYTWKKGLKTGMYYLRSRAAADAIKFTVDTAMLKEKPSVAEGDKEVEEEDNETKLAQMVCSLTNPEECLACGS.

The ATP-cone domain occupies 1-92 (MYVVKRDGRQ…VSNLHKNTKK (92 aa)). ATP contacts are provided by residues 5–6 (KR), 11–17 (ETVHFDK), T53, and D57. 2 residues coordinate GDP: S202 and S217. A disulfide bond links C218 and C444. Residues 226–228 (DSI), K243, R256, and 263–264 (RG) contribute to the dTTP site. N427 is a binding site for GDP. The Proton acceptor role is filled by N427. The active-site Cysteine radical intermediate is C429. Residues E431 and 623 to 626 (TAST) each bind GDP. E431 (proton acceptor) is an active-site residue.

It belongs to the ribonucleoside diphosphate reductase large chain family. As to quaternary structure, heterotetramer of two large/R1 and two small/R2 subunits. A radical transfer pathway may occur between 'Tyr-125' of protein R2 and R1. In terms of processing, contains a disulfide bonds. Binding of the substrate occurs primarily when the active-site cysteines are reduced. In terms of tissue distribution, highly expressed in actively growing tissues such as young leaves, shoot apices, inflorescences and carpels. Very low expression in cotyledons, adult and cauline leaves and senescent leaves.

The protein localises to the cytoplasm. The enzyme catalyses a 2'-deoxyribonucleoside 5'-diphosphate + [thioredoxin]-disulfide + H2O = a ribonucleoside 5'-diphosphate + [thioredoxin]-dithiol. With respect to regulation, under complex allosteric control mediated by deoxynucleoside triphosphates and ATP binding to separate specificity and activation sites on the large subunit. The type of nucleotide bound at the specificity site determines substrate preference. It seems probable that ATP makes the enzyme reduce CDP and UDP, dGTP favors ADP reduction and dTTP favors GDP reduction. Stimulated by ATP and inhibited by dATP binding to the activity site. Functionally, provides the precursors necessary for DNA synthesis. Catalyzes the biosynthesis of deoxyribonucleotides from the corresponding ribonucleotides. R1 contains the binding sites for both substrates and allosteric effectors and carries out the actual reduction of the ribonucleotide. Ribonucleotide reductase (RNR) complex function is essential for efficient organellar DNA degradation in pollen. Involved in chloroplast division. The protein is Ribonucleoside-diphosphate reductase large subunit of Arabidopsis thaliana (Mouse-ear cress).